The sequence spans 398 residues: Na(+)/H(+) antiporter NhaA (398 aa).

The next 11 helical transmembrane spans lie at 19-39, 64-84, 99-119, 130-150, 159-179, 182-202, 222-242, 266-286, 299-319, 337-357, and 370-390; these read IGGILLMLATALALIMANSPG, LLLWINDGLMAGFFFLVGLEL, IILPAIGALGGMVVPSCIYLA, GWAIPAATDIAFALGILSLLG, ILLTTLAIFDDIGAILIIACF, NDIYLPGLLIALLCMLILFIV, IAMLKSGVHATLAGVILAMFI, ATFIILPIFAFANSGINLTNI, IALGLFIGKPLGIISFLWVGV, GMSALAGIGFTMSLFVGSLAF, and LGIIMGSLFSGLLGYLLLNKT.

It belongs to the NhaA Na(+)/H(+) (TC 2.A.33) antiporter family.

It is found in the cell inner membrane. The catalysed reaction is Na(+)(in) + 2 H(+)(out) = Na(+)(out) + 2 H(+)(in). Its function is as follows. Na(+)/H(+) antiporter that extrudes sodium in exchange for external protons. The sequence is that of Na(+)/H(+) antiporter NhaA from Desulfotalea psychrophila (strain LSv54 / DSM 12343).